The chain runs to 496 residues: MSSHTSTPNHASAAPPRKWYDMTSAEFYVYVVAFMCGISMLMPINAVFSAPSYMLQYYLYATKDPNHVPQMTNFWSNVMTYYNLIGLVTGLVMEPLTLLKSFRKIPMLVRLLGGLCILIVEIIVLMAVPARGTTEGGAVATMCIAGFIGGLGKSIFESTVYGMFGAFPPSFTSIMMGGVGISGVLTSLIQIIVKAALPDTYEGVKKQSYIYYSLDVGIQAATFIALIMMRFNSFAQLHFGDLGGVKSKVDAGSLAGAGENVREPGAEATELEQYTEPAIGQIQEKNAEAHKDDPLVDREHSDDVDEHGDALRAVEGPTSNEILRATSIISVLRSIKWMFVSCAFVFVVTLFLFPGIATGMFPESKWFATVAVFIFNCCDVLGRVAPALRFMWPRSYNQRWIIVAASFARVIFVPLLLLYSYHYIPSEAYGYVIMVIFGFSSGYVASMSLTLGPQSKGIDNDGKRFVAGTLMGISILVGGTIGTVLSIMTQTIREKY.

At 1-26 (MSSHTSTPNHASAAPPRKWYDMTSAE) the chain is on the cytoplasmic side. A helical membrane pass occupies residues 27–47 (FYVYVVAFMCGISMLMPINAV). The Extracellular segment spans residues 48 to 77 (FSAPSYMLQYYLYATKDPNHVPQMTNFWSN). The helical transmembrane segment at 78–98 (VMTYYNLIGLVTGLVMEPLTL) threads the bilayer. Topologically, residues 99 to 107 (LKSFRKIPM) are cytoplasmic. The chain crosses the membrane as a helical span at residues 108–128 (LVRLLGGLCILIVEIIVLMAV). Residues 129 to 135 (PARGTTE) lie on the Extracellular side of the membrane. Residues 136 to 156 (GGAVATMCIAGFIGGLGKSIF) traverse the membrane as a helical segment. The Cytoplasmic segment spans residues 157 to 172 (ESTVYGMFGAFPPSFT). The chain crosses the membrane as a helical span at residues 173–193 (SIMMGGVGISGVLTSLIQIIV). Over 194–208 (KAALPDTYEGVKKQS) the chain is Extracellular. A helical membrane pass occupies residues 209–229 (YIYYSLDVGIQAATFIALIMM). Over 230–336 (RFNSFAQLHF…SIISVLRSIK (107 aa)) the chain is Cytoplasmic. Residues 337–357 (WMFVSCAFVFVVTLFLFPGIA) form a helical membrane-spanning segment. Over 358–365 (TGMFPESK) the chain is Extracellular. A helical membrane pass occupies residues 366 to 386 (WFATVAVFIFNCCDVLGRVAP). At 387–399 (ALRFMWPRSYNQR) the chain is on the cytoplasmic side. The helical transmembrane segment at 400 to 420 (WIIVAASFARVIFVPLLLLYS) threads the bilayer. At 421–431 (YHYIPSEAYGY) the chain is on the extracellular side. Residues 432–452 (VIMVIFGFSSGYVASMSLTLG) traverse the membrane as a helical segment. Residues 453–464 (PQSKGIDNDGKR) are Cytoplasmic-facing. The helical transmembrane segment at 465-485 (FVAGTLMGISILVGGTIGTVL) threads the bilayer. The Extracellular segment spans residues 486-496 (SIMTQTIREKY).

This sequence belongs to the SLC29A/ENT transporter (TC 2.A.57) family.

The protein localises to the membrane. It carries out the reaction adenosine(in) = adenosine(out). Adenosine transporter. In Crithidia fasciculata, this protein is Adenosine transporter 1.